The sequence spans 746 residues: Alpha-1,4-glucan:maltose-1-phosphate maltosyltransferase (746 aa).

Residues 1–43 form a disordered region; that stretch reads MAAVQHRATTRTSNTDNSTTKTKSKATSARKSPATKRKRVSAE. The span at 10–32 shows a compositional bias: low complexity; sequence TRTSNTDNSTTKTKSKATSARKS. Residues Lys-343, Gln-403, and Asp-438 each contribute to the alpha-maltose 1-phosphate site. Asp-473 functions as the Nucleophile in the catalytic mechanism. Asn-474 contributes to the alpha-maltose 1-phosphate binding site. Catalysis depends on Glu-502, which acts as the Proton donor. Position 612 to 613 (612 to 613) interacts with alpha-maltose 1-phosphate; that stretch reads KY.

The protein belongs to the glycosyl hydrolase 13 family. GlgE subfamily. As to quaternary structure, homodimer.

The enzyme catalyses alpha-maltose 1-phosphate + [(1-&gt;4)-alpha-D-glucosyl](n) = [(1-&gt;4)-alpha-D-glucosyl](n+2) + phosphate. In terms of biological role, maltosyltransferase that uses maltose 1-phosphate (M1P) as the sugar donor to elongate linear or branched alpha-(1-&gt;4)-glucans. Is involved in a branched alpha-glucan biosynthetic pathway from trehalose, together with TreS, Mak and GlgB. This Bifidobacterium longum (strain NCC 2705) protein is Alpha-1,4-glucan:maltose-1-phosphate maltosyltransferase.